We begin with the raw amino-acid sequence, 212 residues long: Probable GTP-binding protein EngB (212 aa).

The 175-residue stretch at 23–197 folds into the EngB-type G domain; sequence TGIEVAFAGR…ERILDGWFGL (175 aa). GTP contacts are provided by residues 31–38, 58–62, 76–79, 143–146, and 176–178; these read GRSNAGKS, GRTQL, DLPG, TKAD, and FSS. Positions 38 and 60 each coordinate Mg(2+).

Belongs to the TRAFAC class TrmE-Era-EngA-EngB-Septin-like GTPase superfamily. EngB GTPase family. Mg(2+) serves as cofactor.

Functionally, necessary for normal cell division and for the maintenance of normal septation. This is Probable GTP-binding protein EngB from Alteromonas mediterranea (strain DSM 17117 / CIP 110805 / LMG 28347 / Deep ecotype).